The sequence spans 451 residues: Sex peptide receptor-related protein 2 (451 aa).

The Extracellular portion of the chain corresponds to 1–63 (MNYEVYCGNA…DNLEIVVYGQ (63 aa)). Asn15 carries N-linked (GlcNAc...) asparagine glycosylation. Residues 64-84 (IFPILVLFAVFANAAVALVLS) traverse the membrane as a helical segment. Residues 85-97 (KKHMITPTNVVLK) are Cytoplasmic-facing. The helical transmembrane segment at 98–118 (YMAIAELLVGLVPLPWTLFFF) threads the bilayer. The Extracellular segment spans residues 119–140 (SMGNIKETHRLELWWCYLQKYS). An intrachain disulfide couples Cys134 to Cys225. A helical membrane pass occupies residues 141 to 161 (MDAFPPVFHMIAMWLTVLLAA). Residues 162–183 (QRYVSISHPLHSRSACNVKNVR) lie on the Cytoplasmic side of the membrane. The chain crosses the membrane as a helical span at residues 184–204 (LATMIITVTSFLCGLPKSFDY). Over 205 to 251 (EYETVHGWIYSHGNWTYASSCVMMPTAILTNMGQTVYFNIYFWTRAL) the chain is Extracellular. Residue Asn218 is glycosylated (N-linked (GlcNAc...) asparagine). The chain crosses the membrane as a helical span at residues 252–272 (GFIILPSFLLVLLNGLLIKGI). Residues 273 to 301 (RRAQRRKLRLLREKRSEEAARQRDSNSTS) are Cytoplasmic-facing. Residues 302–322 (LMLVAIVSIFLIVNLPQAIFM) form a helical membrane-spanning segment. Over 323–334 (GLLCVCETFTIK) the chain is Extracellular. Residues 335–355 (IPILEGTFPAVFLIASNMIVI) form a helical membrane-spanning segment. At 356 to 451 (ATYPINFGIY…TQFTTMDRSD (96 aa)) the chain is on the cytoplasmic side.

The protein belongs to the G-protein coupled receptor 1 family. Expressed in head neurons including the ASE sensory neurons and the ASI and AWB chemosensory neurons, the midbody neurons SDQ, and motor neurons in the tail.

It is found in the cell membrane. In terms of biological role, G-protein coupled receptor for the neuropeptide like protein nlp-38. Plays a role in several types of aversive gustatory associative learning including gustatory plasticity and salt avoidance learning. Its role in salt avoidance learning may be through activation of the transcription factor crh-1/CREB and de novo transcription and translation, which in turn promotes the formation of long-term memory. This is Sex peptide receptor-related protein 2 from Caenorhabditis elegans.